Reading from the N-terminus, the 172-residue chain is uncharacterized protein (172 aa).

An N-terminal signal peptide occupies residues Met1 to Gly22. Residues Leu23–Thr140 lie on the Extracellular side of the membrane. The interval His27 to Ser69 is disordered. Basic residues predominate over residues Gly29–Ala42. Residues Ser53–Ser69 are compositionally biased toward low complexity. 2 N-linked (GlcNAc...) asparagine glycosylation sites follow: Asn135 and Asn138. The chain crosses the membrane as a helical span at residues Ile141–Ile161. Residues Val162–Tyr172 are Cytoplasmic-facing.

It localises to the membrane. This is an uncharacterized protein from Dictyostelium discoideum (Social amoeba).